The following is a 396-amino-acid chain: uncharacterized protein (396 aa).

12 helical membrane-spanning segments follow: residues 12–32 (LLALAVSAFAIGTTEFISVGL), 48–68 (GLTVSLYALGVTFGAPILTSL), 78–98 (LLWIMFIFIAGNTMAATASSI), 106–126 (VISAFSHGVFMSIGSTIAADI), 138–158 (IMFTGLTVATVTGVPFGTFIG), 165–185 (FAFMVIIAVGIIAFITNGILV), 209–229 (LLLLFVITALGYGGTFVVFTY), 242–262 (AGTVAVILLGYGIAIAIGNMI), 271–291 (PIAALFYMFIVQAIVLFVLTF), 297–317 (AAGLITILCMGLLAFMNVPGL), 338–358 (AMNIAAFNAGIALGSYLGGVI), and 362–382 (IGLIHTAWIGGLMVVGAVILT).

Belongs to the major facilitator superfamily.

Its subcellular location is the cell membrane. This is an uncharacterized protein from Bacillus subtilis (strain 168).